Here is a 91-residue protein sequence, read N- to C-terminus: Acylphosphatase (91 aa).

Residues 5 to 91 (RLTAWVRGHV…RGSFTGFEER (87 aa)) form the Acylphosphatase-like domain. Active-site residues include Arg20 and Asn38.

This sequence belongs to the acylphosphatase family.

It carries out the reaction an acyl phosphate + H2O = a carboxylate + phosphate + H(+). The chain is Acylphosphatase (acyP) from Thermobifida fusca (strain YX).